The chain runs to 381 residues: Putative F-box/kelch-repeat protein At3g17570 (381 aa).

The 45-residue stretch at 1–45 (MFTDLPRDLETEILSRVPATSLQKLKPTCKRWYTLFKDPEFLKKH) folds into the F-box domain. Kelch repeat units follow at residues 151-199 (SYKI…TLKG), 229-281 (LLYQ…KIVE), and 331-379 (RFYI…GGKR).

This chain is Putative F-box/kelch-repeat protein At3g17570, found in Arabidopsis thaliana (Mouse-ear cress).